The primary structure comprises 238 residues: Purine nucleoside phosphorylase DeoD-type (238 aa).

A purine D-ribonucleoside is bound at residue His-4. Phosphate contacts are provided by residues Gly-20, Arg-24, Arg-43, and 87 to 90 (RVGS). A purine D-ribonucleoside is bound by residues 179–181 (EME) and 203–204 (SD). The active-site Proton donor is the Asp-204.

It belongs to the PNP/UDP phosphorylase family. As to quaternary structure, homohexamer; trimer of homodimers.

It carries out the reaction a purine D-ribonucleoside + phosphate = a purine nucleobase + alpha-D-ribose 1-phosphate. The enzyme catalyses a purine 2'-deoxy-D-ribonucleoside + phosphate = a purine nucleobase + 2-deoxy-alpha-D-ribose 1-phosphate. In terms of biological role, catalyzes the reversible phosphorolytic breakdown of the N-glycosidic bond in the beta-(deoxy)ribonucleoside molecules, with the formation of the corresponding free purine bases and pentose-1-phosphate. This is Purine nucleoside phosphorylase DeoD-type from Histophilus somni (strain 129Pt) (Haemophilus somnus).